A 70-amino-acid polypeptide reads, in one-letter code: Large ribosomal subunit protein bL31 (70 aa).

Zn(2+)-binding residues include Cys17, Cys19, Cys37, and Cys40.

The protein belongs to the bacterial ribosomal protein bL31 family. Type A subfamily. Part of the 50S ribosomal subunit. It depends on Zn(2+) as a cofactor.

Binds the 23S rRNA. The polypeptide is Large ribosomal subunit protein bL31 (Clostridium acetobutylicum (strain ATCC 824 / DSM 792 / JCM 1419 / IAM 19013 / LMG 5710 / NBRC 13948 / NRRL B-527 / VKM B-1787 / 2291 / W)).